We begin with the raw amino-acid sequence, 90 residues long: UPF0297 protein ABC1593 (90 aa).

It belongs to the UPF0297 family.

The chain is UPF0297 protein ABC1593 from Shouchella clausii (strain KSM-K16) (Alkalihalobacillus clausii).